The primary structure comprises 184 residues: Ribosome maturation factor RimP (184 aa).

It belongs to the RimP family.

Its subcellular location is the cytoplasm. Functionally, required for maturation of 30S ribosomal subunits. This Corynebacterium diphtheriae (strain ATCC 700971 / NCTC 13129 / Biotype gravis) protein is Ribosome maturation factor RimP.